A 244-amino-acid polypeptide reads, in one-letter code: Ribonuclease PH (244 aa).

Residues Arg-87 and 125-127 (GTR) each bind phosphate.

It belongs to the RNase PH family. Homohexameric ring arranged as a trimer of dimers.

It carries out the reaction tRNA(n+1) + phosphate = tRNA(n) + a ribonucleoside 5'-diphosphate. Phosphorolytic 3'-5' exoribonuclease that plays an important role in tRNA 3'-end maturation. Removes nucleotide residues following the 3'-CCA terminus of tRNAs; can also add nucleotides to the ends of RNA molecules by using nucleoside diphosphates as substrates, but this may not be physiologically important. Probably plays a role in initiation of 16S rRNA degradation (leading to ribosome degradation) during starvation. This chain is Ribonuclease PH, found in Synechococcus sp. (strain JA-2-3B'a(2-13)) (Cyanobacteria bacterium Yellowstone B-Prime).